Consider the following 421-residue polypeptide: UPF0415 protein C7orf25 homolog (421 aa).

It belongs to the UPF0415 family.

The sequence is that of UPF0415 protein C7orf25 homolog from Rattus norvegicus (Rat).